The sequence spans 393 residues: S-adenosylmethionine synthase (393 aa).

Residue His-16 coordinates ATP. Asp-18 is a binding site for Mg(2+). Residue Glu-44 coordinates K(+). Positions 57 and 100 each coordinate L-methionine. The tract at residues 100–110 (QSNDIAQGVDH) is flexible loop. Residues 167–169 (DAK), 238–239 (RF), Asp-247, 253–254 (RK), Ala-270, and Lys-274 contribute to the ATP site. An L-methionine-binding site is contributed by Asp-247. Lys-278 contacts L-methionine.

Belongs to the AdoMet synthase family. In terms of assembly, homotetramer; dimer of dimers. The cofactor is Mg(2+). It depends on K(+) as a cofactor.

It is found in the cytoplasm. It carries out the reaction L-methionine + ATP + H2O = S-adenosyl-L-methionine + phosphate + diphosphate. It participates in amino-acid biosynthesis; S-adenosyl-L-methionine biosynthesis; S-adenosyl-L-methionine from L-methionine: step 1/1. Catalyzes the formation of S-adenosylmethionine (AdoMet) from methionine and ATP. The overall synthetic reaction is composed of two sequential steps, AdoMet formation and the subsequent tripolyphosphate hydrolysis which occurs prior to release of AdoMet from the enzyme. The polypeptide is S-adenosylmethionine synthase (Leptothrix cholodnii (strain ATCC 51168 / LMG 8142 / SP-6) (Leptothrix discophora (strain SP-6))).